Reading from the N-terminus, the 514-residue chain is tRNA-2-methylthio-N(6)-dimethylallyladenosine synthase (514 aa).

Positions 68–186 (RTFLIKTYGC…LPEILEEAYL (119 aa)) constitute an MTTase N-terminal domain. [4Fe-4S] cluster is bound by residues Cys77, Cys113, Cys147, Cys223, Cys227, and Cys230. The region spanning 209-439 (REGSTKAWVN…NKKVGHYSEK (231 aa)) is the Radical SAM core domain. Residues 442-505 (NQYEGKTVTV…QYSLNGTFKE (64 aa)) form the TRAM domain.

It belongs to the methylthiotransferase family. MiaB subfamily. In terms of assembly, monomer. It depends on [4Fe-4S] cluster as a cofactor.

The protein localises to the cytoplasm. The enzyme catalyses N(6)-dimethylallyladenosine(37) in tRNA + (sulfur carrier)-SH + AH2 + 2 S-adenosyl-L-methionine = 2-methylsulfanyl-N(6)-dimethylallyladenosine(37) in tRNA + (sulfur carrier)-H + 5'-deoxyadenosine + L-methionine + A + S-adenosyl-L-homocysteine + 2 H(+). Functionally, catalyzes the methylthiolation of N6-(dimethylallyl)adenosine (i(6)A), leading to the formation of 2-methylthio-N6-(dimethylallyl)adenosine (ms(2)i(6)A) at position 37 in tRNAs that read codons beginning with uridine. The sequence is that of tRNA-2-methylthio-N(6)-dimethylallyladenosine synthase from Staphylococcus haemolyticus (strain JCSC1435).